The primary structure comprises 450 residues: MGAKISEDHPPQGNGGPLSNDPCSAGGEPRGAHLSRDGDGSVGDKGGDDDDDDDEGVVGAVSLTEASDKKKKKKRKPKKKKAKKATHQSSPPRVPLSELFTPGQYPTGEFLEYEDTNTARTTAAELRALGRKQLEDPAFLDDYRRAAEVHRQVRQWAQESVKPGQTLRDIANGIEDGVRALLGNQGLEPGDGLKSGMGFPTGLCLNHETAHYTPNPGQKDVVLQYEDVMKVDFGVHINGWIVDSAFTMSFDPTYDNLLAAVKDATNSGIKVNAAIQEAMESYEVEIAGKTYPVKPVRNISAHNIQHYRIHGGKSIPFIKNSDQTKMEEGEVFAIETFGTTGRGRLYDDVGIYGYKLENGGPSPASLPFASAKKLHKVIKENFGNIVFCRRYLERLGQERYLAGLNCLVSNGLLEAYEPLADVKGSYSAQFEHTILLRESSKEILSRGSDY.

Basic and acidic residues-rich tracts occupy residues 1–10 and 30–39; these read MGAKISEDHP and RGAHLSRDGD. Positions 1-100 are disordered; that stretch reads MGAKISEDHP…PPRVPLSELF (100 aa). The segment covering 47 to 56 has biased composition (acidic residues); sequence GDDDDDDDEG. The segment covering 69 to 86 has biased composition (basic residues); it reads KKKKKKRKPKKKKAKKAT. His-211 contacts substrate. Positions 232, 243, and 302 each coordinate a divalent metal cation. His-310 contributes to the substrate binding site. Positions 335 and 431 each coordinate a divalent metal cation.

The protein belongs to the peptidase M24A family. Methionine aminopeptidase eukaryotic type 2 subfamily. It depends on Co(2+) as a cofactor. Zn(2+) is required as a cofactor. Mn(2+) serves as cofactor. Requires Fe(2+) as cofactor.

The protein resides in the cytoplasm. The enzyme catalyses Release of N-terminal amino acids, preferentially methionine, from peptides and arylamides.. Its function is as follows. Cotranslationally removes the N-terminal methionine from nascent proteins. The N-terminal methionine is often cleaved when the second residue in the primary sequence is small and uncharged (Met-Ala-, Cys, Gly, Pro, Ser, Thr, or Val). The polypeptide is Methionine aminopeptidase 2-2 (Fusarium vanettenii (strain ATCC MYA-4622 / CBS 123669 / FGSC 9596 / NRRL 45880 / 77-13-4) (Fusarium solani subsp. pisi)).